The chain runs to 294 residues: Acetylglutamate kinase (294 aa).

Substrate is bound by residues 60-61 (GG), arginine 82, and asparagine 186.

The protein belongs to the acetylglutamate kinase family. ArgB subfamily.

The protein resides in the cytoplasm. It carries out the reaction N-acetyl-L-glutamate + ATP = N-acetyl-L-glutamyl 5-phosphate + ADP. Its pathway is amino-acid biosynthesis; L-arginine biosynthesis; N(2)-acetyl-L-ornithine from L-glutamate: step 2/4. Catalyzes the ATP-dependent phosphorylation of N-acetyl-L-glutamate. The sequence is that of Acetylglutamate kinase from Methanospirillum hungatei JF-1 (strain ATCC 27890 / DSM 864 / NBRC 100397 / JF-1).